We begin with the raw amino-acid sequence, 451 residues long: CDP-diacylglycerol--serine O-phosphatidyltransferase PssA (451 aa).

2 PLD phosphodiesterase domains span residues 27 to 224 and 239 to 451; these read VDFF…ELRD and SVTP…SRIL. Positions 56, 57, 91, 94, 96, 97, 132, 133, 136, 138, 140, 152, 159, and 167 each coordinate a CDP-1,2-diacyl-sn-glycerol. Residue His138 is part of the active site. Asp169 is a catalytic residue. Residues Tyr273, Asp305, Phe306, Ile316, Ile317, Leu320, Leu323, and Tyr324 each contribute to the a CDP-1,2-diacyl-sn-glycerol site. The active site involves His357. A CDP-1,2-diacyl-sn-glycerol contacts are provided by Lys359, Asn374, and Arg378. The active site involves Glu385. A CDP-1,2-diacyl-sn-glycerol is bound by residues Leu438, Ile447, Ile450, and Leu451.

Belongs to the CDP-alcohol phosphatidyltransferase class-II family. As to quaternary structure, multimeric. Interacts with ACP, YbgC and PlsB, forming altogether a complex at the inner membrane. Monomeric and dimeric; existing in equilibrium, but the monomer probably exhibits preferential membrane association.

The protein resides in the cytoplasm. The protein localises to the cell inner membrane. It catalyses the reaction a CDP-1,2-diacyl-sn-glycerol + L-serine = a 1,2-diacyl-sn-glycero-3-phospho-L-serine + CMP + H(+). It participates in phospholipid metabolism; phosphatidylethanolamine biosynthesis; phosphatidylethanolamine from CDP-diacylglycerol: step 1/2. Its function is as follows. Catalyzes the conversion of cytidine diphosphate diacylglycerol (CDP-DG) and L-serine into phosphatidylserine. Essential for biosynthesis of phosphatidylethanolamine, one of the major membrane phospholipids. Phosphatidylserine is later converted into phosphatidylethanolamine via the action of phosphatidylserine decarboxylase psd. Associates with the bacterial membrane for its role, which depends on the levels of anionic phospholipids in the membrane. This Escherichia coli (strain K12) protein is CDP-diacylglycerol--serine O-phosphatidyltransferase PssA (pssA).